Here is a 128-residue protein sequence, read N- to C-terminus: Aspartate 1-decarboxylase (128 aa).

Ser-25 functions as the Schiff-base intermediate with substrate; via pyruvic acid in the catalytic mechanism. Ser-25 carries the pyruvic acid (Ser) modification. Thr-57 contacts substrate. The Proton donor role is filled by Tyr-58. 73 to 75 lines the substrate pocket; it reads GAA.

Belongs to the PanD family. As to quaternary structure, heterooctamer of four alpha and four beta subunits. It depends on pyruvate as a cofactor. Post-translationally, is synthesized initially as an inactive proenzyme, which is activated by self-cleavage at a specific serine bond to produce a beta-subunit with a hydroxyl group at its C-terminus and an alpha-subunit with a pyruvoyl group at its N-terminus.

The protein localises to the cytoplasm. The catalysed reaction is L-aspartate + H(+) = beta-alanine + CO2. The protein operates within cofactor biosynthesis; (R)-pantothenate biosynthesis; beta-alanine from L-aspartate: step 1/1. Functionally, catalyzes the pyruvoyl-dependent decarboxylation of aspartate to produce beta-alanine. In Moorella thermoacetica (strain ATCC 39073 / JCM 9320), this protein is Aspartate 1-decarboxylase.